We begin with the raw amino-acid sequence, 353 residues long: UDP-N-acetylenolpyruvoylglucosamine reductase (353 aa).

Residues 31–201 (LASHAPAFVA…GSVRFALPRP (171 aa)) form the FAD-binding PCMH-type domain. Arg-177 is an active-site residue. Ser-250 (proton donor) is an active-site residue. Glu-346 is an active-site residue.

This sequence belongs to the MurB family. FAD serves as cofactor.

The protein localises to the cytoplasm. The enzyme catalyses UDP-N-acetyl-alpha-D-muramate + NADP(+) = UDP-N-acetyl-3-O-(1-carboxyvinyl)-alpha-D-glucosamine + NADPH + H(+). It functions in the pathway cell wall biogenesis; peptidoglycan biosynthesis. Functionally, cell wall formation. The sequence is that of UDP-N-acetylenolpyruvoylglucosamine reductase from Bordetella parapertussis (strain 12822 / ATCC BAA-587 / NCTC 13253).